The following is a 114-amino-acid chain: T cell receptor beta variable 4-3 (114 aa).

The N-terminal stretch at 1–21 is a signal peptide; sequence MGCRLLCCAVLCLLGAVPMET. The 93-residue stretch at 22–114 folds into the Ig-like domain; the sequence is GVTQTPRHLV…SALYLCASSQ (93 aa). Cysteine 42 and cysteine 110 form a disulfide bridge. Asparagine 76 and asparagine 89 each carry an N-linked (GlcNAc...) asparagine glycan.

As to quaternary structure, alpha-beta TR is a heterodimer composed of an alpha and beta chain; disulfide-linked. The alpha-beta TR is associated with the transmembrane signaling CD3 coreceptor proteins to form the TR-CD3 (TcR or TCR). The assembly of alpha-beta TR heterodimers with CD3 occurs in the endoplasmic reticulum where a single alpha-beta TR heterodimer associates with one CD3D-CD3E heterodimer, one CD3G-CD3E heterodimer and one CD247 homodimer forming a stable octameric structure. CD3D-CD3E and CD3G-CD3E heterodimers preferentially associate with TR alpha and TR beta chains, respectively. The association of the CD247 homodimer is the last step of TcR assembly in the endoplasmic reticulum and is required for transport to the cell surface.

The protein localises to the cell membrane. In terms of biological role, v region of the variable domain of T cell receptor (TR) beta chain that participates in the antigen recognition. Alpha-beta T cell receptors are antigen specific receptors which are essential to the immune response and are present on the cell surface of T lymphocytes. Recognize peptide-major histocompatibility (MH) (pMH) complexes that are displayed by antigen presenting cells (APC), a prerequisite for efficient T cell adaptive immunity against pathogens. Binding of alpha-beta TR to pMH complex initiates TR-CD3 clustering on the cell surface and intracellular activation of LCK that phosphorylates the ITAM motifs of CD3G, CD3D, CD3E and CD247 enabling the recruitment of ZAP70. In turn ZAP70 phosphorylates LAT, which recruits numerous signaling molecules to form the LAT signalosome. The LAT signalosome propagates signal branching to three major signaling pathways, the calcium, the mitogen-activated protein kinase (MAPK) kinase and the nuclear factor NF-kappa-B (NF-kB) pathways, leading to the mobilization of transcription factors that are critical for gene expression and essential for T cell growth and differentiation. The T cell repertoire is generated in the thymus, by V-(D)-J rearrangement. This repertoire is then shaped by intrathymic selection events to generate a peripheral T cell pool of self-MH restricted, non-autoaggressive T cells. Post-thymic interaction of alpha-beta TR with the pMH complexes shapes TR structural and functional avidity. The sequence is that of T cell receptor beta variable 4-3 from Homo sapiens (Human).